Here is a 479-residue protein sequence, read N- to C-terminus: Sulfate adenylyltransferase subunit 1 (479 aa).

Residues 25–239 (KSLLRFLTCG…EVLETVDIQR (215 aa)) enclose the tr-type G domain. Residues 34–41 (GSVDDGKS) form a G1 region. 34-41 (GSVDDGKS) serves as a coordination point for GTP. A G2 region spans residues 92-96 (GITID). Residues 113–116 (DTPG) form a G3 region. GTP contacts are provided by residues 113–117 (DTPGH) and 168–171 (NKMD). Residues 168–171 (NKMD) are G4. Residues 206-208 (SAL) form a G5 region.

The protein belongs to the TRAFAC class translation factor GTPase superfamily. Classic translation factor GTPase family. CysN/NodQ subfamily. In terms of assembly, heterodimer composed of CysD, the smaller subunit, and CysN.

It catalyses the reaction sulfate + ATP + H(+) = adenosine 5'-phosphosulfate + diphosphate. It participates in sulfur metabolism; hydrogen sulfide biosynthesis; sulfite from sulfate: step 1/3. Its function is as follows. With CysD forms the ATP sulfurylase (ATPS) that catalyzes the adenylation of sulfate producing adenosine 5'-phosphosulfate (APS) and diphosphate, the first enzymatic step in sulfur assimilation pathway. APS synthesis involves the formation of a high-energy phosphoric-sulfuric acid anhydride bond driven by GTP hydrolysis by CysN coupled to ATP hydrolysis by CysD. The protein is Sulfate adenylyltransferase subunit 1 of Salmonella dublin (strain CT_02021853).